Here is a 333-residue protein sequence, read N- to C-terminus: MDVVSLDKPFMYFEEIDNELDYEPESANEVAKKLPYQGQLKLLLGELFFLSKLQRHGILDGATVVYIGSAPGTHIRYLRDHFYNLGVIIKWMLIDGRHHDPILNGLRDVTLVTRFVDEEYLRSIKKQLHPSKIILISDVRSKRGGNEPSTEDLLSNYALQNVMISILNPVASSLKWRCPFPDQWIKDFYIPHGNKMSQPFAPSYSAEMRLLSIYTGENMRLTRVTKSDAVNYEKKMYYLNKIVRNKVVVNFDYPNQEYDYFHMYFMLRTVYCNKTFPTTKAKVLFLQQSIFRFLNIPTTSTEKVSHEPIQCKVSSKDSVYKNRNSKRSVRGNK.

An mRNA-binding site is contributed by tyrosine 22. Residues glutamine 39, tyrosine 66, glycine 68, glycine 72, aspartate 95, arginine 97, valine 116, and aspartate 138 each coordinate S-adenosyl-L-methionine. Residues 169-249 form a binding to NPH-I region; it reads PVASSLKWRC…NKIVRNKVVV (81 aa). A binding to Rap94 region spans residues 169 to 333; that stretch reads PVASSLKWRC…NSKRSVRGNK (165 aa). The active-site For methyltransferase activity is lysine 175. MRNA contacts are provided by residues 177 to 180, aspartate 182, 205 to 207, and glutamate 233; these read RCPF and SAE.

It belongs to the class I-like SAM-binding methyltransferase superfamily. Poxvirus/kinetoplastid 2'-O-MTase family. In terms of assembly, interacts with poly(A) polymerase catalytic subunit OPG063. Interacts with OPG109 and OPG123; these interactions might help linking transcription to capping and polyadenylation.

Its subcellular location is the virion. The enzyme catalyses a 5'-end (N(7)-methyl 5'-triphosphoguanosine)-ribonucleoside in mRNA + S-adenosyl-L-methionine = a 5'-end (N(7)-methyl 5'-triphosphoguanosine)-(2'-O-methyl-ribonucleoside) in mRNA + S-adenosyl-L-homocysteine + H(+). Functionally, displays methyltransferase, positive regulation of the poly(A) polymerase and transcription elongation activities. Involved in the modification of both mRNA ends and in intermediate and late gene positive transcription elongation. At the mRNAs 5' end, methylates the ribose 2' OH group of the first transcribed nucleotide, thereby producing a 2'-O-methylpurine cap. At the 3' end, functions as a processivity factor which stimulates the activity of the viral poly(A) polymerase OPG063 that creates mRNA's poly(A) tail. In the presence of OPG102, OPG063 does not dissociate from the RNA allowing tail elongation to around 250 adenylates. This Homo sapiens (Human) protein is Cap-specific mRNA (nucleoside-2'-O-)-methyltransferase (OPG102).